The sequence spans 363 residues: tRNA (guanine(26)-N(2))-dimethyltransferase (363 aa).

A Trm1 methyltransferase domain is found at 5–352; the sequence is VLRREGGVKF…GEYGEVLMAF (348 aa). Residues R40, R67, D85, D111, and A112 each coordinate S-adenosyl-L-methionine.

The protein belongs to the class I-like SAM-binding methyltransferase superfamily. Trm1 family.

It carries out the reaction guanosine(26) in tRNA + 2 S-adenosyl-L-methionine = N(2)-dimethylguanosine(26) in tRNA + 2 S-adenosyl-L-homocysteine + 2 H(+). In terms of biological role, dimethylates a single guanine residue at position 26 of a number of tRNAs using S-adenosyl-L-methionine as donor of the methyl groups. The chain is tRNA (guanine(26)-N(2))-dimethyltransferase from Pyrobaculum aerophilum (strain ATCC 51768 / DSM 7523 / JCM 9630 / CIP 104966 / NBRC 100827 / IM2).